The primary structure comprises 406 residues: MTVLDRFLKYVTFDTQSNEETGTTPSTPGQRVFAEALVKELEAIGMEEISLDENSYVMATLPANTDEKIPTIGFIAHLDTSPDMSGKNVQPRIVTYLGGDIVLDAEENVVLSQSMFPELSDYKGQDIIVTNGKTLLGADDKGGVAAIVASMQYLKDHPEIKHGKIRIAFTPDEEIGQGADHFDVEKFGCDWGYTIDGGQIGELEYENFNAAGAKIIFKGLNVHPGYAKDKMQNASLRAIEFASWLPAEQRPEHTTGYEGFFHLTGMTGSVEEATLSYIIRDHDRKLFEEKKELLRTLVDKMNEAHPGCAHLELRDQYYNMREVVEPQKHIVDLAFEAMTSVGVEPIVKPIRGGTDGARLSFMGLPCPNIFAGGLNFHGRYEFLPVRSLEKSMETVIKIIELSARKS.

H77 contributes to the Zn(2+) binding site. D79 is a catalytic residue. D139 is a binding site for Zn(2+). Catalysis depends on E173, which acts as the Proton acceptor. Residues E174, D196, and H377 each coordinate Zn(2+).

The protein belongs to the peptidase M20B family. It depends on Zn(2+) as a cofactor.

It localises to the cytoplasm. The enzyme catalyses Release of the N-terminal residue from a tripeptide.. Functionally, cleaves the N-terminal amino acid of tripeptides. This chain is Peptidase T, found in Parabacteroides distasonis (strain ATCC 8503 / DSM 20701 / CIP 104284 / JCM 5825 / NCTC 11152).